The primary structure comprises 337 residues: UDP-3-O-acylglucosamine N-acyltransferase (337 aa).

Histidine 238 functions as the Proton acceptor in the catalytic mechanism.

It belongs to the transferase hexapeptide repeat family. LpxD subfamily. Homotrimer.

It catalyses the reaction a UDP-3-O-[(3R)-3-hydroxyacyl]-alpha-D-glucosamine + a (3R)-hydroxyacyl-[ACP] = a UDP-2-N,3-O-bis[(3R)-3-hydroxyacyl]-alpha-D-glucosamine + holo-[ACP] + H(+). Its pathway is bacterial outer membrane biogenesis; LPS lipid A biosynthesis. Functionally, catalyzes the N-acylation of UDP-3-O-acylglucosamine using 3-hydroxyacyl-ACP as the acyl donor. Is involved in the biosynthesis of lipid A, a phosphorylated glycolipid that anchors the lipopolysaccharide to the outer membrane of the cell. The polypeptide is UDP-3-O-acylglucosamine N-acyltransferase (Xanthomonas oryzae pv. oryzae (strain MAFF 311018)).